Consider the following 326-residue polypeptide: Thrombopoietin (326 aa).

Positions 1–21 are cleaved as a signal peptide; it reads MELTDLLLVAILLLTARLTLS. Cystine bridges form between C28–C172 and C50–C106. N-linked (GlcNAc...) asparagine glycans are attached at residues N197, N206, N235, N249, and N256. Residues 307–326 form a disordered region; the sequence is FPPSPTFPTPGSPPQLPPVS. Over residues 308 to 326 the composition is skewed to pro residues; it reads PPSPTFPTPGSPPQLPPVS.

It belongs to the EPO/TPO family.

Its subcellular location is the secreted. Its function is as follows. Lineage-specific cytokine affecting the proliferation and maturation of megakaryocytes from their committed progenitor cells. It acts at a late stage of megakaryocyte development. It may be the major physiological regulator of circulating platelets. The protein is Thrombopoietin (Thpo) of Rattus norvegicus (Rat).